A 320-amino-acid chain; its full sequence is Cytochrome f (320 aa).

The N-terminal stretch at 1–35 is a signal peptide; it reads MQTRNTFSSIKEEITRSISVSLMIYIITWAPVSNA. The heme site is built by Tyr-36, Cys-56, Cys-59, and His-60. A helical transmembrane segment spans residues 286–306; it reads VQGLLFFFASVILAQIFLVLK.

It belongs to the cytochrome f family. In terms of assembly, the 4 large subunits of the cytochrome b6-f complex are cytochrome b6, subunit IV (17 kDa polypeptide, petD), cytochrome f and the Rieske protein, while the 4 small subunits are PetG, PetL, PetM and PetN. The complex functions as a dimer. Heme is required as a cofactor.

Its subcellular location is the plastid. The protein resides in the chloroplast thylakoid membrane. Component of the cytochrome b6-f complex, which mediates electron transfer between photosystem II (PSII) and photosystem I (PSI), cyclic electron flow around PSI, and state transitions. The sequence is that of Cytochrome f from Cucumis sativus (Cucumber).